Here is a 406-residue protein sequence, read N- to C-terminus: RNA exonuclease 4 (406 aa).

Positions 1-10 (MAPELSSNWK) are enriched in polar residues. Disordered stretches follow at residues 1–108 (MAPE…TLPS) and 156–181 (AGLT…PTDL). Low complexity-rich tracts occupy residues 54 to 64 (SQQQQQASNPS), 72 to 82 (SQTQSQPSSQK), and 94 to 108 (SKPT…TLPS). Over residues 162–173 (GHSSSSPKSNKN) the composition is skewed to polar residues. An Exonuclease domain is found at 216–367 (YLSIDCEMVG…EDARVAMLLF (152 aa)). Residues 377-387 (ENSNRYEEGQA) show a composition bias toward basic and acidic residues. Residues 377-406 (ENSNRYEEGQAKKGGNGGGGGGGKKKKGKK) form a disordered region. A compositionally biased stretch (gly residues) spans 388–398 (KKGGNGGGGGG).

Belongs to the REXO4 family.

The protein resides in the nucleus. In terms of biological role, exoribonuclease involved in ribosome biosynthesis. Involved in the processing of ITS1, the internal transcribed spacer localized between the 18S and 5.8S rRNAs. The chain is RNA exonuclease 4 (rex-4) from Neurospora crassa (strain ATCC 24698 / 74-OR23-1A / CBS 708.71 / DSM 1257 / FGSC 987).